The chain runs to 558 residues: uncharacterized protein (558 aa).

The segment at 396–420 (SSITDNDTDNDSGATESQQTDSEND) is disordered. Residues 407–416 (SGATESQQTD) show a composition bias toward polar residues.

Belongs to the chlamydial CPn_0065/CT_288/TC_0561 family.

This is an uncharacterized protein from Chlamydia muridarum (strain MoPn / Nigg).